A 357-amino-acid chain; its full sequence is Transcription factor unc-86 (357 aa).

Positions 35 to 44 match the POU-IV box motif; that stretch reads RAAQVALADI. In terms of domain architecture, POU-specific spans 155–232; that stretch reads DMDTDPRQLE…ILHSWLEKAE (78 aa). A DNA-binding region (homeobox) is located at residues 253 to 312; the sequence is KKRKRTSIAAPEKRELEQFFKQQPRPSGERIASIADRLDLKKNVVRVWFCNQRQKQKRDF.

Belongs to the POU transcription factor family. Class-4 subfamily. As to quaternary structure, interacts with mec-3; the heterooligomer binds to the promoters of mec-3, mec-4 and mec-7. In terms of tissue distribution, specific to neurons and neuroblasts. Expressed in CEM head neurons and in IL2, URA, URB, URX and URY neurons. Not expressed in olfactory sensory neurons but expressed in AIZ interneurons.

The protein resides in the nucleus. Its function is as follows. Transcription factor required for correct cell fate determination and differentiation in diverse neuronal cell lineages where it plays a role in specifying the fate of daughter cells during cell divisions. Involved in sensory neuron production and function. Binds both alone and with mec-3 to the mec-3 promoter to initiate and maintain mec-3 expression which is required for sensory neuron differentiation. In addition, binds both alone and with mec-3 to the promoters of mec-4 and mec-7 which act to regulate sensory neuron function. Involved in determining the identity of the serotonergic NSM neurons and the cholinergic IL2 sensory and URA motor neurons. Promotes expression of the cfi-1 transcription factor in the URA and IL2 neurons which in turn activates normal URA and IL2 gene expression. Required to determine the identity of BDU sensory neurons in concert with transcription factor unc-86, regulating expression of a number of genes, including transcription factors ceh-14 and ahr-1, neuropeptides flp-10, nlp-1 and nlp-15, and tyramine receptor-encoding ser-2. Regulates expression of a number of genes in NSM neurons including bas-1, cat-1, dop-3, mgl-3, nlp-13, scd-2 and ptps-1. In the IL2 neurons, required for expression of cho-1, gcy-19, klp-6, lag-2, unc-5 and unc-17. Promotes expression of pkd-2 in the male-specific CEM head neurons. Required for dauer-specific branching of IL2Q neurons and nictation behavior. Controls both the timing and direction of axon outgrowth in HSN neurons. Plays a role in serotonin production by regulating expression of the tryptophan hydrolase tph-1 which catalyzes serotonin synthesis, in the AIM, NSM, HSN and RIH neurons. Involved in regulation of lin-11 expression in the AIZ interneurons, the major interneurons of the olfactory pathway, and is required for odortaxis behavior. Involved in neurite pruning between AIM neurons during larval development by regulating the expression of transcription factor mbr-1. Required for correct localization of unc-40. The sequence is that of Transcription factor unc-86 (unc-86) from Caenorhabditis elegans.